Consider the following 240-residue polypeptide: Urease accessory protein UreF (240 aa).

The protein belongs to the UreF family. UreD, UreF and UreG form a complex that acts as a GTP-hydrolysis-dependent molecular chaperone, activating the urease apoprotein by helping to assemble the nickel containing metallocenter of UreC. The UreE protein probably delivers the nickel.

Its subcellular location is the cytoplasm. Required for maturation of urease via the functional incorporation of the urease nickel metallocenter. The polypeptide is Urease accessory protein UreF (Rhodopseudomonas palustris (strain TIE-1)).